We begin with the raw amino-acid sequence, 300 residues long: Iron/alpha-ketoglutarate-dependent dioxygenase okaE (300 aa).

Fe cation is bound by residues histidine 134, aspartate 136, and histidine 210.

Belongs to the PhyH family. As to quaternary structure, homodimer. Fe cation serves as cofactor.

The catalysed reaction is okaramine A + 2-oxoglutarate + AH2 + O2 = 12-deshydroxyl okaramine E + succinate + A + CO2 + H2O. It carries out the reaction 12-deshydroxyl okaramine E + 2-oxoglutarate + O2 = okaramine E + succinate + CO2. The enzyme catalyses okaramine A + 2-oxoglutarate + O2 = okaramine E + succinate + CO2. It functions in the pathway alkaloid biosynthesis. The protein operates within secondary metabolite biosynthesis; terpenoid biosynthesis. Its function is as follows. Iron/alpha-ketoglutarate-dependent dioxygenase; part of the gene cluster that mediates the biosynthesis of okaramine B, a prenylated indole alkaloid that possesses an unusual octacyclic ring system, including a four-membered azetidine ring and an eight-membered azocine ring, and that exhibits insecticidal activity against silkworm larvae. Within the pathway, okaE forms the unusual 2-dimethyl-3-methyl-azetidine ring to yield 12-deshydroxyl okaramine E from okaramine A. OkaE also catalyzes the hydroxylation of 12-deshydroxyl okaramine E to produce okaramine E. The biosynthesis begins with the NRPS okaA that condenses two tryptophan molecules into cyclo(L-Trp-L-Trp). Prenylation by the prenyltransferase okaC then leads to the formation of cyclo(N8-(alpha,alpha-dimethylallyl)-L-Trp-6a-(alpha,alpha-dime-thylallyl)-L-Trp). This is followed by indole 2,3-epoxidation by the FAD-dependent monooxygenase okaB to facilitate the formation of the hexahydropyrrolo[2,3-b]indole (HPI) moiety of okaramine C. The cytochrome P450 monooxygenase okaD then likely catalyzes formation of the eight-membered ring of okaramine A. The dioxygenase okaE further forms the unusual 2-dimethyl-3-methyl-azetidine ring to yield 12-deshydroxyl okaramine E, as well as the hydroxylation of 12-deshydroxyl okaramine E to produce okaramine E. The cytochrome P450 monoxygenase okaG converts 12-deshydroxyl okaramine E into 3-desmethyl okaramine B which is further methylated by the methyltransferase okaF into okaramine B. In a shunt pathway, okaG and okaF together are also able to convert okaramine E into okaramine D. Okaramine H is produced by nonenzymatic conversion from okaramine A. In Penicillium ochrochloron, this protein is Iron/alpha-ketoglutarate-dependent dioxygenase okaE.